The primary structure comprises 200 residues: Pyridoxine/pyridoxamine 5'-phosphate oxidase (200 aa).

Residues 48–53 (RMVLLK), 63–64 (YT), K70, and Q92 contribute to the FMN site. K53 contacts substrate. Substrate is bound by residues Y110, R114, and S118. Residues 127 to 128 (QS) and W171 contribute to the FMN site. 177-179 (RLH) serves as a coordination point for substrate. R181 serves as a coordination point for FMN.

The protein belongs to the pyridoxamine 5'-phosphate oxidase family. In terms of assembly, homodimer. FMN serves as cofactor.

The enzyme catalyses pyridoxamine 5'-phosphate + O2 + H2O = pyridoxal 5'-phosphate + H2O2 + NH4(+). It carries out the reaction pyridoxine 5'-phosphate + O2 = pyridoxal 5'-phosphate + H2O2. The protein operates within cofactor metabolism; pyridoxal 5'-phosphate salvage; pyridoxal 5'-phosphate from pyridoxamine 5'-phosphate: step 1/1. It functions in the pathway cofactor metabolism; pyridoxal 5'-phosphate salvage; pyridoxal 5'-phosphate from pyridoxine 5'-phosphate: step 1/1. Catalyzes the oxidation of either pyridoxine 5'-phosphate (PNP) or pyridoxamine 5'-phosphate (PMP) into pyridoxal 5'-phosphate (PLP). This is Pyridoxine/pyridoxamine 5'-phosphate oxidase from Cereibacter sphaeroides (strain ATCC 17023 / DSM 158 / JCM 6121 / CCUG 31486 / LMG 2827 / NBRC 12203 / NCIMB 8253 / ATH 2.4.1.) (Rhodobacter sphaeroides).